The following is a 196-amino-acid chain: Imidazoleglycerol-phosphate dehydratase (196 aa).

The protein belongs to the imidazoleglycerol-phosphate dehydratase family.

Its subcellular location is the cytoplasm. The catalysed reaction is D-erythro-1-(imidazol-4-yl)glycerol 3-phosphate = 3-(imidazol-4-yl)-2-oxopropyl phosphate + H2O. The protein operates within amino-acid biosynthesis; L-histidine biosynthesis; L-histidine from 5-phospho-alpha-D-ribose 1-diphosphate: step 6/9. This is Imidazoleglycerol-phosphate dehydratase from Clostridium novyi (strain NT).